Here is a 420-residue protein sequence, read N- to C-terminus: Senescence-associated protein SPA15, chloroplastic (420 aa).

Residues 1-68 constitute a chloroplast transit peptide; sequence MAKPNGIIYS…YIATRGSSLR (68 aa). Residues 85–111 are disordered; sequence EYRDSSDTSSMQGKDKDPASLGKSGTP.

It belongs to the ATA15/OSA15 family. In terms of tissue distribution, expressed in leaves.

It is found in the plastid. The protein resides in the chloroplast. Its function is as follows. May be involved in the regulation of leaf senescence. This chain is Senescence-associated protein SPA15, chloroplastic, found in Ipomoea batatas (Sweet potato).